Here is a 451-residue protein sequence, read N- to C-terminus: MICPDCGKGIEATFKFCPYCGKPLPAEKHEGSQSFVKPFTSSSQGSRRKTNTSSETSSKKVKWCSYAASPSLPLPSEGKSSGSEDTLSTSGKPKGHLSRSPTPRSSPQTTRQSPQTLKRSRMTASLEALPVGTVLTDKSGQHWKLRCLQTRDDQGILYEAESDSTTGSESSPQKQRFSLKLDAKDGRLFNEQNFFQRAAKPLQVNKWKKLYSIPQLAIPTCIGFGVHQDKYRFLVFPTLGRSLQSILDDFPKHVMSVRSVFQMACRLLDALEFLHENEYVHGNVTAENIFVNPENLCQVTLAGYGFTFRYSPGGRHVAYTEGSRSPHEGHLEFISMDLHKGCGPSRRSDLQTLGYCLLKWLYGTLPWTNCLPNTEEIVKLKQKFLDNPEGLVGQCSRWITPSETLQEYLKVVMALQYEEKPPYSTLRNELEALLQDLRASAYDPLDLQVVP.

2 disordered regions span residues 28–61 and 74–125; these read KHEGSQSFVKPFTSSSQGSRRKTNTSSETSSKKV and LPSE…MTAS. Over residues 32 to 45 the composition is skewed to polar residues; sequence SQSFVKPFTSSSQG. Residues 47 to 62 carry the Nuclear localization signal motif; it reads RRKTNTSSETSSKKVK. Phosphoserine is present on residues Ser53, Ser57, Ser80, Ser81, Ser88, and Ser106. Over residues 78–91 the composition is skewed to polar residues; that stretch reads GKSSGSEDTLSTSG. Low complexity predominate over residues 98–116; the sequence is SRSPTPRSSPQTTRQSPQT. A Protein kinase domain is found at 123–434; sequence TASLEALPVG…TLRNELEALL (312 aa).

The protein belongs to the protein kinase superfamily. CK1 Ser/Thr protein kinase family. VRK subfamily. As to quaternary structure, interacts with DUSP3. Interacts with RAN. Interacts with HSP70/HSPA1A. In terms of processing, phosphorylated at Ser-106 by CDK5; leading to protection of the cell against H2O2-induced apoptosis. Ubiquitinated by RNF144A.

Its subcellular location is the nucleus. It localises to the cytoplasm. The catalysed reaction is L-seryl-[protein] + ATP = O-phospho-L-seryl-[protein] + ADP + H(+). Its function is as follows. Plays a role in the regulation of the cell cycle by phosphorylating the nuclear envelope protein barrier-to-autointegration factor/BAF that is required for disassembly and reassembly, respectively, of the nuclear envelope during mitosis. Under normal physiological conditions, negatively regulates ERK activity along with VHR phosphatase in the nucleus, causing timely and transient action of ERK. Stress conditions activate CDK5 which phosphorylates VRK3 to increase VHR phosphatase activity and suppress prolonged ERK activation that causes cell death. For example, upon glutamate induction, promotes nuclear localization of HSP70/HSPA1A to inhibit ERK activation via VHR phosphatase. This chain is Serine/threonine-protein kinase VRK3 (VRK3), found in Bos taurus (Bovine).